The chain runs to 96 residues: Prokineticin Bm8-d (96 aa).

The first 19 residues, 1–19 (MKCFAQIVVLLLVIAFSHG), serve as a signal peptide directing secretion. 5 cysteine pairs are disulfide-bonded: C26–C38, C32–C50, C37–C78, C60–C86, and C80–C95.

Belongs to the AVIT (prokineticin) family. As to expression, expressed by the skin glands.

The protein resides in the secreted. In terms of biological role, potent agonist for both PKR1/PROKR1 and PKR2/PROKR2, and inducer of a potent and long-lasting hyperalgesia. Also potentiates capsaicin-induced TRPV1 current, when tested on DRG neurons. At subnanomolar concentrations, this protein both induces potent chemotaxis of macrophages and stimulates LPS-induced production of the pro-inflammatory cytokines IL-1 and IL-12. In vivo, potently stimulates the contraction of the guinea-pig gastrointestinal (GI) smooth muscle (nanomolar concentration). This Bombina maxima (Giant fire-bellied toad) protein is Prokineticin Bm8-d.